Here is a 237-residue protein sequence, read N- to C-terminus: Uridylate kinase (237 aa).

11 to 14 (KLSG) is a binding site for ATP. Position 53 (Gly-53) interacts with UMP. ATP-binding residues include Gly-54 and Arg-58. UMP is bound by residues Asp-73 and 134–141 (TGNPFFTT). The ATP site is built by Thr-161, Tyr-167, and Asp-170.

It belongs to the UMP kinase family. Homohexamer.

The protein resides in the cytoplasm. The enzyme catalyses UMP + ATP = UDP + ADP. It participates in pyrimidine metabolism; CTP biosynthesis via de novo pathway; UDP from UMP (UMPK route): step 1/1. Its activity is regulated as follows. Inhibited by UTP. Functionally, catalyzes the reversible phosphorylation of UMP to UDP. This Burkholderia vietnamiensis (strain G4 / LMG 22486) (Burkholderia cepacia (strain R1808)) protein is Uridylate kinase.